A 455-amino-acid polypeptide reads, in one-letter code: Phosphoglucosamine mutase (455 aa).

Residue S107 is the Phosphoserine intermediate of the active site. Residues S107, D247, D249, and D251 each contribute to the Mg(2+) site. S107 is modified (phosphoserine).

This sequence belongs to the phosphohexose mutase family. The cofactor is Mg(2+). Activated by phosphorylation.

The catalysed reaction is alpha-D-glucosamine 1-phosphate = D-glucosamine 6-phosphate. Catalyzes the conversion of glucosamine-6-phosphate to glucosamine-1-phosphate. The protein is Phosphoglucosamine mutase of Leuconostoc citreum (strain KM20).